Reading from the N-terminus, the 159-residue chain is Na(+)/H(+) antiporter subunit E1 (159 aa).

Helical transmembrane passes span 1–21 (MAIQ…VTNS), 27–47 (FVLG…VLPG), 60–80 (LIIT…KIIL), and 101–121 (WQLV…VLGI).

Belongs to the CPA3 antiporters (TC 2.A.63) subunit E family. In terms of assembly, may form a heterooligomeric complex that consists of seven subunits: mnhA1, mnhB1, mnhC1, mnhD1, mnhE1, mnhF1 and mnhG1.

It localises to the cell membrane. Functionally, mnh complex is a Na(+)/H(+) antiporter involved in Na(+) excretion. The protein is Na(+)/H(+) antiporter subunit E1 (mnhE1) of Staphylococcus epidermidis (strain ATCC 35984 / DSM 28319 / BCRC 17069 / CCUG 31568 / BM 3577 / RP62A).